The primary structure comprises 196 residues: Peroxiredoxin TSA1 (196 aa).

A Thioredoxin domain is found at 3–161; that stretch reads AQVQKQAPTF…ALRLVEAFQW (159 aa). Residue Lys-14 forms a Glycyl lysine isopeptide (Lys-Gly) (interchain with G-Cter in ubiquitin) linkage. 45–47 contacts substrate; it reads TFV. Cys-48 serves as the catalytic Cysteine sulfenic acid (-SOH) intermediate. Lys-89 participates in a covalent cross-link: Glycyl lysine isopeptide (Lys-Gly) (interchain with G-Cter in ubiquitin). Residue Arg-124 participates in substrate binding. Lys-132 is covalently cross-linked (Glycyl lysine isopeptide (Lys-Gly) (interchain with G-Cter in ubiquitin)). The residue at position 174 (Thr-174) is a Phosphothreonine.

Belongs to the peroxiredoxin family. AhpC/Prx1 subfamily. Homodimer; disulfide-linked, upon oxidation. Interacts with YAP1 via transient disulfide linkages. Post-translationally, the enzyme can be inactivated by further oxidation of the cysteine sulfenic acid (C(P)-SOH) to sulphinic acid (C(P)-SO2H) instead of its condensation to a disulfide bond. It can be reactivated by forming a transient disulfide bond with sulfiredoxin SRX1, which reduces the cysteine sulfinic acid in an ATP- and Mg-dependent manner.

The protein localises to the cytoplasm. The enzyme catalyses a hydroperoxide + [thioredoxin]-dithiol = an alcohol + [thioredoxin]-disulfide + H2O. Functionally, thiol-specific peroxidase that catalyzes the reduction of hydrogen peroxide and organic hydroperoxides to water and alcohols, respectively. Plays a role in cell protection against oxidative stress by detoxifying peroxides and as sensor of hydrogen peroxide-mediated signaling events. Protects the cell against the oxidative stress caused by nascent-protein misfolding and aggregation. Relays hydrogen peroxide as a signal to the transcription factor YAP1 by inducing the formation of intramolecular disulfide bonds in YAP1, which causes its nuclear accumulation and activation. Can act alternatively as peroxidase and molecular chaperone. Oxidative stress and heat shock exposure cause a reversible shift of the protein structure from low MW species to high MW complexes, triggering a peroxidase-to-chaperone functional switch. The chaperone function of the protein enhances resistance to heat shock. The chain is Peroxiredoxin TSA1 from Saccharomyces cerevisiae (strain ATCC 204508 / S288c) (Baker's yeast).